The primary structure comprises 82 residues: UPF0437 protein in nifX-nifW intergenic region (82 aa).

The protein belongs to the UPF0437 family.

This is UPF0437 protein in nifX-nifW intergenic region from Frankia alni.